The primary structure comprises 250 residues: 3-deoxy-manno-octulosonate cytidylyltransferase (250 aa).

It belongs to the KdsB family.

The protein localises to the cytoplasm. It catalyses the reaction 3-deoxy-alpha-D-manno-oct-2-ulosonate + CTP = CMP-3-deoxy-beta-D-manno-octulosonate + diphosphate. Its pathway is nucleotide-sugar biosynthesis; CMP-3-deoxy-D-manno-octulosonate biosynthesis; CMP-3-deoxy-D-manno-octulosonate from 3-deoxy-D-manno-octulosonate and CTP: step 1/1. It functions in the pathway bacterial outer membrane biogenesis; lipopolysaccharide biosynthesis. Functionally, activates KDO (a required 8-carbon sugar) for incorporation into bacterial lipopolysaccharide in Gram-negative bacteria. The polypeptide is 3-deoxy-manno-octulosonate cytidylyltransferase (Azorhizobium caulinodans (strain ATCC 43989 / DSM 5975 / JCM 20966 / LMG 6465 / NBRC 14845 / NCIMB 13405 / ORS 571)).